The primary structure comprises 248 residues: Flagellar L-ring protein (248 aa).

A signal peptide spans 1–23 (MRHAFRHSVRTLGLLGLLPVLSA). Cys-24 is lipidated: N-palmitoyl cysteine. Cys-24 carries the S-diacylglycerol cysteine lipid modification.

It belongs to the FlgH family. In terms of assembly, the basal body constitutes a major portion of the flagellar organelle and consists of four rings (L,P,S, and M) mounted on a central rod.

It is found in the cell outer membrane. The protein resides in the bacterial flagellum basal body. Functionally, assembles around the rod to form the L-ring and probably protects the motor/basal body from shearing forces during rotation. In Gluconobacter oxydans (strain 621H) (Gluconobacter suboxydans), this protein is Flagellar L-ring protein.